A 127-amino-acid chain; its full sequence is Holo-[acyl-carrier-protein] synthase (127 aa).

Mg(2+) is bound by residues Asp-9 and Glu-58.

This sequence belongs to the P-Pant transferase superfamily. AcpS family. Mg(2+) is required as a cofactor.

It is found in the cytoplasm. It catalyses the reaction apo-[ACP] + CoA = holo-[ACP] + adenosine 3',5'-bisphosphate + H(+). In terms of biological role, transfers the 4'-phosphopantetheine moiety from coenzyme A to a Ser of acyl-carrier-protein. In Shewanella sp. (strain MR-4), this protein is Holo-[acyl-carrier-protein] synthase.